The sequence spans 111 residues: Protein BEX5 (111 aa).

Over residues 1 to 12 (MENVPKENKVVE) the composition is skewed to basic and acidic residues. A disordered region spans residues 1 to 37 (MENVPKENKVVEKAPVQNEAPALGGGEYQEPGGNVKG). A his cluster region spans residues 100 to 104 (HHDHH). Cys-108 is a binding site for Zn(2+).

The protein belongs to the BEX family. In terms of processing, ubiquitinated. Degraded by the proteasome.

The protein resides in the cytoplasm. This Homo sapiens (Human) protein is Protein BEX5 (BEX5).